A 181-amino-acid chain; its full sequence is Protein GrpE (181 aa).

Residues 1–13 (MENTQENPATQSA) show a composition bias toward polar residues. The interval 1–39 (MENTQENPATQSAEDIGSEKQAAQGAAPAAEAADAALAE) is disordered. The span at 21 to 39 (QAAQGAAPAAEAADAALAE) shows a compositional bias: low complexity.

This sequence belongs to the GrpE family. Homodimer.

It is found in the cytoplasm. Participates actively in the response to hyperosmotic and heat shock by preventing the aggregation of stress-denatured proteins, in association with DnaK and GrpE. It is the nucleotide exchange factor for DnaK and may function as a thermosensor. Unfolded proteins bind initially to DnaJ; upon interaction with the DnaJ-bound protein, DnaK hydrolyzes its bound ATP, resulting in the formation of a stable complex. GrpE releases ADP from DnaK; ATP binding to DnaK triggers the release of the substrate protein, thus completing the reaction cycle. Several rounds of ATP-dependent interactions between DnaJ, DnaK and GrpE are required for fully efficient folding. This Burkholderia lata (strain ATCC 17760 / DSM 23089 / LMG 22485 / NCIMB 9086 / R18194 / 383) protein is Protein GrpE.